The sequence spans 445 residues: Tubulin alpha-1 chain (445 aa).

GTP is bound at residue Q11. An N6-acetyllysine modification is found at K40. Residues E71, S140, G144, T145, T179, N206, and N228 each coordinate GTP. Residue E71 participates in Mg(2+) binding. The active site involves E254.

Belongs to the tubulin family. As to quaternary structure, dimer of alpha and beta chains. A typical microtubule is a hollow water-filled tube with an outer diameter of 25 nm and an inner diameter of 15 nM. Alpha-beta heterodimers associate head-to-tail to form protofilaments running lengthwise along the microtubule wall with the beta-tubulin subunit facing the microtubule plus end conferring a structural polarity. Microtubules usually have 13 protofilaments but different protofilament numbers can be found in some organisms and specialized cells. Requires Mg(2+) as cofactor. In terms of processing, acetylation of alpha chains at Lys-40 stabilizes microtubules and affects affinity and processivity of microtubule motors. This modification has a role in multiple cellular functions, ranging from cell motility, cell cycle progression or cell differentiation to intracellular trafficking and signaling.

Its subcellular location is the cytoplasm. The protein localises to the cytoskeleton. It catalyses the reaction GTP + H2O = GDP + phosphate + H(+). In terms of biological role, tubulin is the major constituent of microtubules, a cylinder consisting of laterally associated linear protofilaments composed of alpha- and beta-tubulin heterodimers. Microtubules grow by the addition of GTP-tubulin dimers to the microtubule end, where a stabilizing cap forms. Below the cap, tubulin dimers are in GDP-bound state, owing to GTPase activity of alpha-tubulin. The chain is Tubulin alpha-1 chain from Stylonychia lemnae (Ciliate).